The sequence spans 128 residues: Cytochrome c-type biogenesis protein CcmE (128 aa).

Residues 1–8 (MQKRVRNR) lie on the Cytoplasmic side of the membrane. The helical; Signal-anchor for type II membrane protein transmembrane segment at 9 to 29 (LITIIICFCSACLGISIILYN) threads the bilayer. The Extracellular segment spans residues 30–128 (LEKNIVFFLP…KHDENYRPPQ (99 aa)). Positions 120 and 124 each coordinate heme.

It belongs to the CcmE/CycJ family.

Its subcellular location is the cell membrane. Functionally, heme chaperone required for the biogenesis of c-type cytochromes. Transiently binds heme delivered by CcmC and transfers the heme to apo-cytochromes in a process facilitated by CcmF and CcmH. The sequence is that of Cytochrome c-type biogenesis protein CcmE from Rickettsia africae (strain ESF-5).